Here is a 286-residue protein sequence, read N- to C-terminus: Glycine--tRNA ligase alpha subunit (286 aa).

Belongs to the class-II aminoacyl-tRNA synthetase family. As to quaternary structure, tetramer of two alpha and two beta subunits.

It localises to the cytoplasm. It catalyses the reaction tRNA(Gly) + glycine + ATP = glycyl-tRNA(Gly) + AMP + diphosphate. The polypeptide is Glycine--tRNA ligase alpha subunit (glyQ) (Thermotoga maritima (strain ATCC 43589 / DSM 3109 / JCM 10099 / NBRC 100826 / MSB8)).